Consider the following 532-residue polypeptide: D-arabinono-1,4-lactone oxidase (532 aa).

The 175-residue stretch at 25–199 (YSARPRLYFQ…VRATIRVVPA (175 aa)) folds into the FAD-binding PCMH-type domain. His-62 carries the post-translational modification Pros-8alpha-FAD histidine.

Belongs to the oxygen-dependent FAD-linked oxidoreductase family. FAD is required as a cofactor.

Its subcellular location is the mitochondrion membrane. The catalysed reaction is D-arabinono-1,4-lactone + O2 = dehydro-D-arabinono-1,4-lactone + H2O2 + H(+). It functions in the pathway cofactor biosynthesis; D-erythroascorbate biosynthesis; dehydro-D-arabinono-1,4-lactone from D-arabinose: step 2/2. In Eremothecium gossypii (strain ATCC 10895 / CBS 109.51 / FGSC 9923 / NRRL Y-1056) (Yeast), this protein is D-arabinono-1,4-lactone oxidase (ALO1).